Here is a 337-residue protein sequence, read N- to C-terminus: Viral cathepsin (337 aa).

The signal sequence occupies residues 1 to 16; it reads MNKILILLLLVSAVLT. Residues 17 to 126 constitute a propeptide, activation peptide; that stretch reads SHDQVVAVTI…VVDGPGQRQR (110 aa). 3 disulfides stabilise this stretch: Cys147/Cys188, Cys181/Cys221, and Cys276/Cys324. Cys150 is a catalytic residue. Catalysis depends on residues His283 and Asn303.

The protein belongs to the peptidase C1 family. In terms of processing, synthesized as an inactive proenzyme and activated by proteolytic removal of the inhibitory propeptide.

It catalyses the reaction Endopeptidase of broad specificity, hydrolyzing substrates of both cathepsin L and cathepsin B.. Functionally, cysteine protease that plays an essential role in host liquefaction to facilitate horizontal transmission of the virus. May participate in the degradation of foreign protein expressed by the baculovirus system. The protein is Viral cathepsin (VCATH) of Mamestra configurata (bertha armyworm).